Consider the following 507-residue polypeptide: Minor capsid protein L2 (507 aa).

The Nuclear localization signal signature appears at M1–A9. A disulfide bridge connects residues C18 and C24. The Nuclear localization signal signature appears at K500–Y506.

It belongs to the papillomaviridae L2 protein family. As to quaternary structure, interacts with major capsid protein L1. Interacts with E2; this interaction inhibits E2 transcriptional activity but not the DNA replication function E2. Interacts with host GADD45GIP1. Interacts with host HSPA8; this interaction is required for L2 nuclear translocation. Interacts with host importins KPNB2 and KPNB3. Forms a complex with importin alpha2-beta1 heterodimers via interaction with the importin alpha2 adapter. Interacts with host DYNLT1; this interaction is essential for virus intracellular transport during entry. Interacts (via C-terminus) with host retromer subunits VPS35 and VPS29. In terms of processing, highly phosphorylated.

It localises to the virion. The protein resides in the host nucleus. It is found in the host early endosome. Its subcellular location is the host Golgi apparatus. Its function is as follows. Minor protein of the capsid that localizes along the inner surface of the virion, within the central cavities beneath the L1 pentamers. Plays a role in capsid stabilization through interaction with the major capsid protein L1. Once the virion enters the host cell, L2 escorts the genomic DNA into the nucleus by promoting escape from the endosomal compartments and traffic through the host Golgi network. Mechanistically, the C-terminus of L2 possesses a cell-penetrating peptide that protudes from the host endosome, interacts with host cytoplasmic retromer cargo and thereby mediates the capsid delivery to the host trans-Golgi network. Plays a role through its interaction with host dynein in the intracellular microtubule-dependent transport of viral capsid toward the nucleus. Mediates the viral genome import into the nucleus through binding to host importins. Once within the nucleus, L2 localizes viral genomes to host PML bodies in order to activate early gene expression for establishment of infection. Later on, promotes late gene expression by interacting with the viral E2 protein and by inhibiting its transcriptional activation functions. During virion assembly, encapsidates the genome by direct interaction with the viral DNA. The polypeptide is Minor capsid protein L2 (Human papillomavirus type 1 (Human papillomavirus type 1a)).